A 323-amino-acid chain; its full sequence is Ig gamma chain C region (323 aa).

3 consecutive Ig-like domains span residues 6 to 96, 114 to 213, and 222 to 318; these read PSVF…KTVA, PSVF…KTIS, and PKVY…KSIS.

The polypeptide is Ig gamma chain C region (Oryctolagus cuniculus (Rabbit)).